A 147-amino-acid chain; its full sequence is MSEELQPVFSIERLYVKDLSLEVPHAPQIFLEQGEPEVEMRVSTGSQKLEDGYYNVDVTVTVTAKLDNERTMFLNEVTQSGIFRLENIPEEDADLLLGVACPNILFPYAREAVSGTVTRAGFPPVLLAPINFEAIYQQQQEAEAAGA.

It belongs to the SecB family. As to quaternary structure, homotetramer, a dimer of dimers. One homotetramer interacts with 1 SecA dimer.

It is found in the cytoplasm. In terms of biological role, one of the proteins required for the normal export of preproteins out of the cell cytoplasm. It is a molecular chaperone that binds to a subset of precursor proteins, maintaining them in a translocation-competent state. It also specifically binds to its receptor SecA. This chain is Protein-export protein SecB, found in Neisseria meningitidis serogroup B (strain ATCC BAA-335 / MC58).